Consider the following 782-residue polypeptide: Translation initiation factor IF-2 (782 aa).

A disordered region spans residues 47-196; it reads DNAIDGTNKK…TPPKPKELPE (150 aa). The span at 53–65 shows a compositional bias: basic and acidic residues; the sequence is TNKKAEAPKKETT. The span at 66–81 shows a compositional bias: polar residues; the sequence is SNENGNSKGPNKPNMT. 2 stretches are compositionally biased toward low complexity: residues 82–93 and 118–170; these read NSNEKSNKPNNP and NTSK…NNKG. The tr-type G domain occupies 283–452; the sequence is ERPPVVTIMG…LLVSEVEELK (170 aa). Positions 292–299 are G1; it reads GHVDHGKT. 292–299 contacts GTP; it reads GHVDHGKT. A G2 region spans residues 317–321; that stretch reads GITQH. The segment at 338–341 is G3; sequence DTPG. GTP is bound by residues 338–342 and 392–395; these read DTPGH and NKID. The interval 392–395 is G4; the sequence is NKID. A G5 region spans residues 428–430; sequence SAK.

The protein belongs to the TRAFAC class translation factor GTPase superfamily. Classic translation factor GTPase family. IF-2 subfamily.

Its subcellular location is the cytoplasm. In terms of biological role, one of the essential components for the initiation of protein synthesis. Protects formylmethionyl-tRNA from spontaneous hydrolysis and promotes its binding to the 30S ribosomal subunits. Also involved in the hydrolysis of GTP during the formation of the 70S ribosomal complex. This Listeria monocytogenes serotype 4b (strain CLIP80459) protein is Translation initiation factor IF-2.